The sequence spans 66 residues: Regulator of G-protein signaling 11 (66 aa).

In terms of domain architecture, RGS spans 1-66 (EACEELRFGG…DAAQLHIYML (66 aa)).

As to quaternary structure, heterodimer with Gbeta5. Interacts with RGS7BP, leading to regulate the subcellular location of the heterodimer formed with Gbeta5.

Functionally, inhibits signal transduction by increasing the GTPase activity of G protein alpha subunits thereby driving them into their inactive GDP-bound form. The polypeptide is Regulator of G-protein signaling 11 (Rgs11) (Rattus norvegicus (Rat)).